The sequence spans 184 residues: Photosystem I assembly protein Ycf4 (184 aa).

The next 2 membrane-spanning stretches (helical) occupy residues 22-42 (FCWA…GTSS) and 57-77 (ILFF…LFIS).

This sequence belongs to the Ycf4 family.

It localises to the plastid. The protein localises to the chloroplast thylakoid membrane. Its function is as follows. Seems to be required for the assembly of the photosystem I complex. This Chloranthus spicatus (Chulantree) protein is Photosystem I assembly protein Ycf4.